The primary structure comprises 131 residues: uncharacterized protein (131 aa).

The tract at residues 1-67 is disordered; it reads MCSARKLLRG…HSGEPIGDDY (67 aa). Position 14 is a phosphoserine (serine 14). The helical transmembrane segment at 99-119 threads the bilayer; the sequence is VVVLFFWLMLWFLGLQALGLV.

The protein belongs to the FAM241 family.

It is found in the membrane. This is an uncharacterized protein from Mus musculus (Mouse).